The primary structure comprises 249 residues: Hydroxyacylglutathione hydrolase (249 aa).

7 residues coordinate Zn(2+): His-53, His-55, Asp-57, His-58, His-110, Asp-127, and His-165.

The protein belongs to the metallo-beta-lactamase superfamily. Glyoxalase II family. As to quaternary structure, monomer. The cofactor is Zn(2+).

It carries out the reaction an S-(2-hydroxyacyl)glutathione + H2O = a 2-hydroxy carboxylate + glutathione + H(+). The protein operates within secondary metabolite metabolism; methylglyoxal degradation; (R)-lactate from methylglyoxal: step 2/2. Thiolesterase that catalyzes the hydrolysis of S-D-lactoyl-glutathione to form glutathione and D-lactic acid. The sequence is that of Hydroxyacylglutathione hydrolase from Buchnera aphidicola subsp. Baizongia pistaciae (strain Bp).